The following is a 129-amino-acid chain: Small ribosomal subunit protein uS11 (129 aa).

It belongs to the universal ribosomal protein uS11 family. Part of the 30S ribosomal subunit. Interacts with proteins S7 and S18. Binds to IF-3.

Functionally, located on the platform of the 30S subunit, it bridges several disparate RNA helices of the 16S rRNA. Forms part of the Shine-Dalgarno cleft in the 70S ribosome. In Nitratidesulfovibrio vulgaris (strain DSM 19637 / Miyazaki F) (Desulfovibrio vulgaris), this protein is Small ribosomal subunit protein uS11.